The chain runs to 71 residues: DNA-directed RNA polymerases I, II, and III subunit RPABC5 (71 aa).

Zn(2+)-binding residues include Cys7, Cys10, Cys44, and Cys45.

Belongs to the archaeal Rpo10/eukaryotic RPB10 RNA polymerase subunit family. Component of the RNA polymerase I (Pol I), RNA polymerase II (Pol II) and RNA polymerase III (Pol III) complexes consisting of at least 13, 12 and 17 subunits, respectively.

It is found in the nucleus. Functionally, DNA-dependent RNA polymerase catalyzes the transcription of DNA into RNA using the four ribonucleoside triphosphates as substrates. Common component of RNA polymerases I, II and III which synthesize ribosomal RNA precursors, mRNA precursors and many functional non-coding RNAs, and a small RNAs, such as 5S rRNA and tRNAs, respectively. Pol II is the central component of the basal RNA polymerase II transcription machinery. Pols are composed of mobile elements that move relative to each other. In Pol II, RBP10 is part of the core element with the central large cleft. The sequence is that of DNA-directed RNA polymerases I, II, and III subunit RPABC5 from Brassica napus (Rape).